A 2517-amino-acid chain; its full sequence is Serine/threonine-protein kinase ATR (2517 aa).

Residues 1178–1214 (EPMLEQIVNVLMAGCQHDDSQLQMASAKCLGELGAID) form an HEAT repeat. The region spanning 1509 to 2066 (LVSRASYNCG…LWMLLPHFKS (558 aa)) is the FAT domain. Ser-1569 carries the post-translational modification Phosphoserine. Tyr-1570 carries the phosphotyrosine modification. Position 1573 is a phosphoserine (Ser-1573). Phosphothreonine is present on Thr-1575. The region spanning 2184-2508 (FQESVLILRS…EATKVDNLAS (325 aa)) is the PI3K/PI4K catalytic domain. Positions 2190 to 2196 (ILRSAAK) are G-loop. Residues 2360–2368 (GLGDRHGEN) form a catalytic loop region. Residues 2380 to 2404 (HVDFNCLFNQGELLPYPEVVPFRLT) form an activation loop region. One can recognise an FATC domain in the interval 2485-2517 (IPLSTEGQVNFLINEATKVDNLASMYIGWGAFL).

It belongs to the PI3/PI4-kinase family. ATM subfamily. In terms of assembly, interacts with mus304. It depends on Mn(2+) as a cofactor.

The protein resides in the nucleus. The catalysed reaction is L-seryl-[protein] + ATP = O-phospho-L-seryl-[protein] + ADP + H(+). The enzyme catalyses L-threonyl-[protein] + ATP = O-phospho-L-threonyl-[protein] + ADP + H(+). Its function is as follows. Serine/threonine protein kinase which activates checkpoint signaling upon genotoxic stresses such as ionizing radiation (IR), ultraviolet light (UV), or DNA replication stalling, thereby acting as a DNA damage sensor. Recognizes the substrate consensus sequence [ST]-Q. Phosphorylates various proteins, which collectively inhibits DNA replication and mitosis and promotes DNA repair and recombination. Phosphorylates grp/CHK1. Phosphorylates 'Ser-137' of histone variant H2AX/H2AV at sites of DNA damage, thereby regulating DNA damage response mechanism. Essential for the DNA damage checkpoint in larval imaginal disks and neuroblasts and for the DNA replication checkpoint in the embryo. Also has an essential role during early nuclear divisions in embryos, where it is required to delay mitosis in response to incomplete DNA replication. Also plays an important role during meiosis, where it may monitor double-strand-break repair during meiotic crossing over, to regulate the progression of prophase I, and to enforce metaphase I delay observed at the end of oogenesis. Involved in telomere maintenance and prevention of telomere fusion; potentially functioning downstream of moi/modigliani. This Drosophila melanogaster (Fruit fly) protein is Serine/threonine-protein kinase ATR (mei-41).